The primary structure comprises 86 residues: Progonadoliberin-2 (86 aa).

The N-terminal stretch at 1 to 24 is a signal peptide; that stretch reads MVSVCRLLLVAALLLCLQAQLSFS. Position 25 is a pyrrolidone carboxylic acid (Q25). At G34 the chain carries Glycine amide.

It belongs to the GnRH family.

The protein localises to the secreted. Stimulates the secretion of gonadotropins. In Clarias gariepinus (North African catfish), this protein is Progonadoliberin-2 (gnrh2).